The sequence spans 320 residues: Glutaminyl-peptide cyclotransferase (320 aa).

Over residues 1–12 the composition is skewed to basic residues; sequence MATRSPYKRQTK. Residues 1-22 form a disordered region; it reads MATRSPYKRQTKRSMIQSLPAS. At 1–36 the chain is on the cytoplasmic side; that stretch reads MATRSPYKRQTKRSMIQSLPASSSASSRRRFISRKR. The helical; Signal-anchor for type II membrane protein transmembrane segment at 37–57 threads the bilayer; sequence FAMMIPLALLSGAVFLFFMPF. The Lumenal portion of the chain corresponds to 58-320; the sequence is NSWGQSSGSS…GNYIEQQCLV (263 aa). N-linked (GlcNAc...) asparagine glycans are attached at residues Asn-99 and Asn-163.

The protein belongs to the plant glutaminyl-peptide cyclotransferase family. Post-translationally, glycosylated.

Its subcellular location is the endoplasmic reticulum membrane. It catalyses the reaction N-terminal L-glutaminyl-[peptide] = N-terminal 5-oxo-L-prolyl-[peptide] + NH4(+). Functionally, converts glutamine and N-terminal glutamyl residues in peptides to 5-oxoproline and 5-oxoproline residues. Not involved in the major pathway for 5-oxoproline production. This Arabidopsis thaliana (Mouse-ear cress) protein is Glutaminyl-peptide cyclotransferase (QCT).